Reading from the N-terminus, the 350-residue chain is Aldo-keto reductase 1B (350 aa).

Tyr84 (proton donor) is an active-site residue. His146 contributes to the substrate binding site. An NADP(+)-binding site is contributed by 244–306 (SPLGSPNRPW…SVTKDRIESN (63 aa)).

This sequence belongs to the aldo/keto reductase family.

Its subcellular location is the cytoplasm. The catalysed reaction is an alditol + NADP(+) = an aldose + NADPH + H(+). The enzyme catalyses all-trans-retinol + NADP(+) = all-trans-retinal + NADPH + H(+). It carries out the reaction 9-cis-retinol + NADP(+) = 9-cis-retinal + NADPH + H(+). It catalyses the reaction 13-cis-retinol + NADP(+) = 13-cis-retinal + NADPH + H(+). The catalysed reaction is glycerol + NADP(+) = D-glyceraldehyde + NADPH + H(+). The enzyme catalyses glycerol + NADP(+) = L-glyceraldehyde + NADPH + H(+). It carries out the reaction prenol + NADP(+) = 3-methyl-2-butenal + NADPH + H(+). It catalyses the reaction (E)-hex-2-en-1-ol + NADP(+) = (E)-hex-2-enal + NADPH + H(+). The catalysed reaction is (E,E)-2,4-hexadien-1-ol + NADP(+) = (E,E)-2,4-hexadienal + NADPH + H(+). The enzyme catalyses a 4-hydroxynonen-1-ol + NADP(+) = a 4-hydroxynonenal + NADPH + H(+). It carries out the reaction prostaglandin F2alpha + NADP(+) = prostaglandin H2 + NADPH + H(+). It catalyses the reaction allyl alcohol + NADP(+) = acrolein + NADPH + H(+). The catalysed reaction is pyridine 3-methanol + NADP(+) = pyridine-3-carbaldehyde + NADPH + H(+). The enzyme catalyses 1-hexadecanoyl-2-(5-oxopentanoyl)-sn-glycero-3-phosphocholine + NADPH + H(+) = 1-hexadecanoyl-2-(5-hydroxypentanoyl)-sn-glycero-3-phosphocholine + NADP(+). It carries out the reaction 1-hexadecanoyl-2-(7-oxoheptanoyl)-sn-glycero-3-phosphocholine + NADPH + H(+) = 1-hexadecanoyl-2-(7-hydroxyheptanoyl)-sn-glycero-3-phosphocholine + NADP(+). It catalyses the reaction 1-hexadecanoyl-2-(9-oxononanoyl)-sn-glycero-3-phosphocholine + NADPH + H(+) = 1-hexadecanoyl-2-(9-hydroxynonanoyl)-sn-glycero-3-phosphocholine + NADP(+). The catalysed reaction is 1-hexadecanoyl-2-(5-oxopentanoyl)-sn-glycero-3-phosphoethanolamine + NADPH + H(+) = 1-hexadecanoyl-2-(5-hydroxypentanoyl)-sn-glycero-3-phosphoethanolamine + NADP(+). Catalyzes the NADPH-dependent reduction of a wide variety of carbonyl-containing compounds to their corresponding alcohols. Displays enzymatic activity towards endogenous metabolites such as aromatic and aliphatic aldehydes, ketones, monosaccharides, bile acids and xenobiotics substrates. Key enzyme in the polyol pathway, catalyzes reduction of glucose to sorbitol during hyperglycemia. Reduces steroids and their derivatives and prostaglandins. Through production of prostaglandin F2alpha may regulate the activity of non-muscle myosin II in an autocrine or paracrine fashion; influences border cell and nurse cell stiffness to facilitate border cell cluster migration. Also regulates the cell surface localization of integrins in an autocrine or paracrine fashion; influences border cell adhesion to maintain border cell cluster morphology. In hemocytes, probably contributes to production of sugar alcohols in the hemolymph, which act as alarmins involved in gut-fat body innate immunological communication (GFIC); leads to activation of the imd/Relish signaling pathway in the fat body. In Drosophila melanogaster (Fruit fly), this protein is Aldo-keto reductase 1B.